We begin with the raw amino-acid sequence, 296 residues long: Aldo-keto reductase MYCFIDRAFT_156381 (296 aa).

Aspartate 14 is a binding site for NADP(+). Tyrosine 19 serves as the catalytic Proton donor. Substrate is bound at residue histidine 83. NADP(+)-binding positions include 113 to 114, glutamine 139, 168 to 178, and arginine 191; these read CN and SPLAGGMLTDR. Position 201 (tyrosine 201) interacts with substrate. 255-263 is a binding site for NADP(+); the sequence is SSAEQLESN.

It belongs to the aldo/keto reductase family. Aldo/keto reductase 2 subfamily.

Its pathway is secondary metabolite biosynthesis. Functionally, aldo-keto reductase; part of the gene cluster that mediates the biosynthesis of an emodin derivative that may be involved in black Sigatoka disease of banana. The pathway begins with the synthesis of atrochrysone thioester by the polyketide synthase PKS8-1. The atrochrysone carboxyl ACP thioesterase MYCFIDRAFT_190111 then breaks the thioester bond and releases the atrochrysone carboxylic acid from PKS8-1. The decarboxylase MYCFIDRAFT_34057 then catalyzes the concerted decarboxylation-elimination required to convert atochrysone carboxylic acid into emodin anthrone, which is further oxidized to emodin by the anthrone oxygenase MYCFIDRAFT_34418. The functions of the other tailoring enzymes as well as the final product of the cluster have still to be identified. In Pseudocercospora fijiensis (strain CIRAD86) (Black leaf streak disease fungus), this protein is Aldo-keto reductase MYCFIDRAFT_156381.